Here is a 447-residue protein sequence, read N- to C-terminus: UMP-CMP kinase 2, mitochondrial (447 aa).

The transit peptide at 1 to 73 (MALISRPRAP…ELLGPPGRSY (73 aa)) directs the protein to the mitochondrion. 259–266 (GLDATGKT) provides a ligand contact to ATP. Positions 380-412 (EERVRRLQGRGQEKTKEEAELEANNVFRQKVEM) form a coiled coil.

This sequence belongs to the thymidylate kinase family. As to expression, strongly expressed in the brain.

It is found in the mitochondrion. The catalysed reaction is CMP + ATP = CDP + ADP. It catalyses the reaction dCMP + ATP = dCDP + ADP. It carries out the reaction a 2'-deoxyribonucleoside 5'-diphosphate + ATP = a 2'-deoxyribonucleoside 5'-triphosphate + ADP. The enzyme catalyses a ribonucleoside 5'-diphosphate + ATP = a ribonucleoside 5'-triphosphate + ADP. Functionally, mitochondrial nucleotide monophosphate kinase needed for salvage dNTP synthesis that mediates immunomodulatory and antiviral activities through IFN-dependent and IFN-independent pathways. Restricts the replication of multiple viruses including flaviviruses or coronaviruses. Together with viperin/RSAD2 and ddhCTP, suppresses the replication of several coronaviruses through inhibition of the viral RNA-dependent RNA polymerase activities. Concerning flaviviruses, restricts RNA translation when localized to the mitochondria independently of its kinase activity. Is able to phosphorylate dUMP, dCMP, CMP, UMP and monophosphates of the pyrimidine nucleoside analogs ddC, dFdC, araC, BVDU and FdUrd with ATP as phosphate donor. Efficacy is highest for dUMP followed by dCMP while CMP and UMP are poor substrates. Controls therefore mitochondrial DNA synthesis by supplying required deoxyribonucleotides. CMPK2-dependent mitochondrial DNA synthesis is necessary for the production of oxidized mitochondrial DNA fragments after exposure to NLRP3 activators. In turn, cytosolic oxidized mtDNA associates with the NLRP3 inflammasome complex and is required for its activation. The polypeptide is UMP-CMP kinase 2, mitochondrial (Cmpk2) (Mus musculus (Mouse)).